Here is a 137-residue protein sequence, read N- to C-terminus: Fatty acid-binding protein homolog 7 (137 aa).

This sequence belongs to the calycin superfamily. Fatty-acid binding protein (FABP) family.

The chain is Fatty acid-binding protein homolog 7 (lbp-7) from Caenorhabditis elegans.